A 474-amino-acid chain; its full sequence is Dol-P-Glc:Glc(2)Man(9)GlcNAc(2)-PP-Dol alpha-1,2-glucosyltransferase (474 aa).

At 1 to 6 (MAQLEG) the chain is on the cytoplasmic side. Residues 7 to 27 (YYFSAALSCTFLVSCLLFSAF) traverse the membrane as a helical segment. Residues 28–64 (SRALREPYMDEIFHLPQAQRYCEGRFSLSQWDPMITT) lie on the Extracellular side of the membrane. A helical membrane pass occupies residues 65–85 (LPGLYLVSVGVVKPASWILGW). The Cytoplasmic segment spans residues 86 to 97 (SEHVVCSIGMLR). The chain crosses the membrane as a helical span at residues 98 to 118 (FVNLLFSVGNFYLLYLLFRKI). At 119–126 (QPRNKASS) the chain is on the extracellular side. A helical transmembrane segment spans residues 127-147 (SIQRILSTLTLAVFPTLYFFN). At 148 to 150 (FLY) the chain is on the cytoplasmic side. The helical transmembrane segment at 151-171 (YTEAGSVFFTLFAYLMCLYGN) threads the bilayer. The Extracellular portion of the chain corresponds to 172 to 175 (HRTS). A helical transmembrane segment spans residues 176–196 (ALLGFCGFMFRQTNIIWAAFC). Over 197 to 256 (AGHIIAQKCSEAWKTELQKKKEERLPPAKGPLSELRRVLQFLLMYSMSLKNLSMLFLLTW) the chain is Cytoplasmic. Residues 257 to 277 (PYMLLLLAFFVFVVVNGGIVV) form a helical membrane-spanning segment. Topologically, residues 278–283 (GDRSSH) are extracellular. Residues 284 to 304 (EACLHFPQLFYFFSFTAFFSF) traverse the membrane as a helical segment. Topologically, residues 305-317 (PHLLSPTKVKTFL) are cytoplasmic. A helical membrane pass occupies residues 318–338 (SLVWKRRVQFSVITLVSVFLV). At 339 to 365 (WKFTYVHKYLLADNRHYTFYVWKRVFQ) the chain is on the extracellular side. A helical transmembrane segment spans residues 366–386 (RHEIVKYLLVPAYMFAGWAVA). Topologically, residues 387–392 (DSLKSK) are cytoplasmic. Residues 393-413 (SIFWNLMFFVCLVASTVPQKL) traverse the membrane as a helical segment. Over 414–436 (LEFRYFILPYIIYRLNMPLPPIS) the chain is Extracellular. The chain crosses the membrane as a helical span at residues 437-457 (RLVCELGCYAVVNFLTFYIFL). At 458-473 (NKTFQWSDSHDIQRFM) the chain is on the cytoplasmic side.

It belongs to the ALG10 glucosyltransferase family. In terms of assembly, interacts with KCNH1; may regulate KCNH1, possibly by regulating its N-glycosylation. Interacts with KCNH2; may reduce KCNH2 sensitivity to classic proarrhythmic drug blockade, possibly by regulating its N-glycosylation. In terms of tissue distribution, highly expressed in brain, skeletal muscle, uterus, small intestine and liver. Moderately expressed in lung and kidney. Weakly expressed in heart and stomach.

Its subcellular location is the endoplasmic reticulum membrane. The catalysed reaction is an alpha-D-Glc-(1-&gt;3)-alpha-D-Glc-(1-&gt;3)-alpha-D-Man-(1-&gt;2)-alpha-D-Man-(1-&gt;2)-alpha-D-Man-(1-&gt;3)-[alpha-D-Man-(1-&gt;2)-alpha-D-Man-(1-&gt;3)-[alpha-D-Man-(1-&gt;2)-alpha-D-Man-(1-&gt;6)]-alpha-D-Man-(1-&gt;6)]-beta-D-Man-(1-&gt;4)-beta-D-GlcNAc-(1-&gt;4)-alpha-D-GlcNAc-diphospho-di-trans,poly-cis-dolichol + a di-trans,poly-cis-dolichyl beta-D-glucosyl phosphate = a alpha-D-Glc-(1-&gt;2)-alpha-D-Glc-(1-&gt;3)-alpha-D-Glc-(1-&gt;3)-alpha-D-Man-(1-&gt;2)-alpha-D-Man-(1-&gt;2)-alpha-D-Man-(1-&gt;3)-[alpha-D-Man-(1-&gt;2)-alpha-D-Man-(1-&gt;3)-[alpha-D-Man-(1-&gt;2)-alpha-D-Man-(1-&gt;6)]-alpha-D-Man-(1-&gt;6)]-beta-D-Man-(1-&gt;4)-beta-D-GlcNAc-(1-&gt;4)-alpha-D-GlcNAc-diphospho-di-trans,poly-cis-dolichol + a di-trans,poly-cis-dolichyl phosphate + H(+). The protein operates within protein modification; protein glycosylation. In terms of biological role, dol-P-Glc:Glc(2)Man(9)GlcNAc(2)-PP-Dol alpha-1,2-glucosyltransferase that operates in the biosynthetic pathway of dolichol-linked oligosaccharides, the glycan precursors employed in protein asparagine (N)-glycosylation. The assembly of dolichol-linked oligosaccharides begins on the cytosolic side of the endoplasmic reticulum membrane and finishes in its lumen. The sequential addition of sugars to dolichol pyrophosphate produces dolichol-linked oligosaccharides containing fourteen sugars, including two GlcNAcs, nine mannoses and three glucoses. Once assembled, the oligosaccharide is transferred from the lipid to nascent proteins by oligosaccharyltransferases. In the lumen of the endoplasmic reticulum, adds the third and last glucose residue from dolichyl phosphate glucose (Dol-P-Glc) onto the lipid-linked oligosaccharide intermediate Glc(2)Man(9)GlcNAc(2)-PP-Dol to produce Glc(3)Man(9)GlcNAc(2)-PP-Dol. In Rattus norvegicus (Rat), this protein is Dol-P-Glc:Glc(2)Man(9)GlcNAc(2)-PP-Dol alpha-1,2-glucosyltransferase.